Here is a 322-residue protein sequence, read N- to C-terminus: MAEDEIWTEKYRPRRLEDVIGHQQITRRLISYVKSGNLPHLLFSGPPGVGKTACAVALARELYGETWHSNFIELNASDERGIDVVRNNIKNFARTAPLGEAKFKIIFLDEADALTSDAQSALRRTMERYAATCRFIISCNYSSKIIEPIQSRCAVYRFGPLNATDITTGITRIAKNEGLKIEKDGMDALIYVARGDMRRAINALQSAATIAKDITADVIYQTTSTAKPKEIEDMLKLALNGQFMDSRNKLDELLITYGLSGTDIIDQIYRSMFELGLDEDVLVALVDRIGEADFRLTEGASERIQIEALLAHFKMQGAARSK.

45 to 52 contributes to the ATP binding site; the sequence is GPPGVGKT.

It belongs to the activator 1 small subunits family. RfcS subfamily. In terms of assembly, heteromultimer composed of small subunits (RfcS) and large subunits (RfcL).

In terms of biological role, part of the RFC clamp loader complex which loads the PCNA sliding clamp onto DNA. In Methanocella arvoryzae (strain DSM 22066 / NBRC 105507 / MRE50), this protein is Replication factor C small subunit.